The following is a 171-amino-acid chain: Transcription elongation factor GreB (171 aa).

Positions 53 to 75 form a coiled coil; the sequence is KKRLREIDRRVRFLAKRLEVLKI.

It belongs to the GreA/GreB family. GreB subfamily.

Its function is as follows. Necessary for efficient RNA polymerase transcription elongation past template-encoded arresting sites. The arresting sites in DNA have the property of trapping a certain fraction of elongating RNA polymerases that pass through, resulting in locked ternary complexes. Cleavage of the nascent transcript by cleavage factors such as GreA or GreB allows the resumption of elongation from the new 3'terminus. GreB releases sequences of up to 9 nucleotides in length. This Yersinia pestis protein is Transcription elongation factor GreB.